A 423-amino-acid chain; its full sequence is Ferrochelatase, mitochondrial (423 aa).

Residues 1–29 constitute a mitochondrion transit peptide; it reads MISRKIISTINSKTFYNKSLSYCTVNNNK. Position 173 (cysteine 173) interacts with [2Fe-2S] cluster. Residues histidine 207 and aspartate 380 contribute to the active site. [2Fe-2S] cluster is bound by residues cysteine 401, cysteine 404, and cysteine 411.

Belongs to the ferrochelatase family. As to quaternary structure, monomer. Requires [2Fe-2S] cluster as cofactor.

Its subcellular location is the mitochondrion inner membrane. It catalyses the reaction heme b + 2 H(+) = protoporphyrin IX + Fe(2+). The protein operates within porphyrin-containing compound metabolism; protoheme biosynthesis; protoheme from protoporphyrin-IX: step 1/1. In terms of biological role, catalyzes the ferrous insertion into protoporphyrin IX. The sequence is that of Ferrochelatase, mitochondrial (hemH) from Dictyostelium discoideum (Social amoeba).